A 528-amino-acid chain; its full sequence is Dihydromonacolin L monooxygenase LovA (528 aa).

Over 1–23 (MTVDALTQPHHLLSLAWNDTQQH) the chain is Cytoplasmic. The helical; Signal-anchor for type II membrane protein transmembrane segment at 24 to 44 (GSWFAPLVTTSAGLLCLLLYL) threads the bilayer. The Lumenal portion of the chain corresponds to 45–528 (CSSGRRSELP…DEDIRLPGSL (484 aa)). A glycan (N-linked (GlcNAc...) asparagine) is linked at Asn-399. Position 465 (Cys-465) interacts with heme.

It belongs to the cytochrome P450 family. Heme serves as cofactor.

It is found in the membrane. Its subcellular location is the endoplasmic reticulum membrane. It catalyses the reaction dihydromonacolin L carboxylate + reduced [NADPH--hemoprotein reductase] + O2 = monacolin L carboxylate + oxidized [NADPH--hemoprotein reductase] + 2 H2O + H(+). The enzyme catalyses monacolin L carboxylate + reduced [NADPH--hemoprotein reductase] + O2 = monacolin J carboxylate + oxidized [NADPH--hemoprotein reductase] + H2O + H(+). The protein operates within polyketide biosynthesis; lovastatin biosynthesis. In terms of biological role, dihydromonacolin L monooxygenase; part of the gene cluster that mediates the biosynthesis of lovastatin (also known as mevinolin, mevacor or monacolin K), a hypolipidemic inhibitor of (3S)-hydroxymethylglutaryl-coenzyme A (HMG-CoA) reductase (HMGR). The first step in the biosynthesis of lovastatin is the production of dihydromonacolin L acid by the lovastatin nonaketide synthase lovB and the trans-acting enoyl reductase lovC via condensation of one acetyl-CoA unit and 8 malonyl-CoA units. Dihydromonacolin L acid is released from lovB by the thioesterase lovG. Next, dihydromonacolin L acid is oxidized by the dihydromonacolin L monooxygenase lovA twice to form monacolin J acid. The 2-methylbutyrate moiety of lovastatin is synthesized by the lovastatin diketide synthase lovF via condensation of one acetyl-CoA unit and one malonyl-CoA unit. Finally, the covalent attachment of this moiety to monacolin J acid is catalyzed by the transesterase lovD to yield lovastatin. LovD has broad substrate specificity and can also convert monacolin J to simvastatin using alpha-dimethylbutanoyl-S-methyl-3-mercaptopropionate (DMB-S-MMP) as the thioester acyl donor, and can also catalyze the reverse reaction and function as hydrolase in vitro. LovD has much higher activity with LovF-bound 2-methylbutanoate than with free diketide substrates. This chain is Dihydromonacolin L monooxygenase LovA, found in Aspergillus terreus (strain NIH 2624 / FGSC A1156).